The primary structure comprises 334 residues: MIEADRIISASPKREEEVIDRAIRPKLLADYVGQPSVREQMEIFIKAAKLRDEALDHLLIFGPPGLGKTTLANIVANEMGVNIRTTSGPVLEKAGDLAAMLTNLEPYDVLFIDEIHRLSPAIEEVLYPAMEDYQLDIMIGEGPAARSIKLDLPPFTLVGATTRAGSLTSPLRDRFGIVQRLEFYSVDDLTSIVKRSADCLNLNLSPDGAYEVARRSRGTPRIANRLLRRVRDYADVRNNGVITSDIAKQALAMLDVDSEGFDFMDIKLLQAIVERFDGGPVGLDNLAAAIGEERDTIEDVLEPYLIQQGFLQRTPRGRIATSRTYAHLGIAKLD.

Residues 4-184 (ADRIISASPK…FGIVQRLEFY (181 aa)) are large ATPase domain (RuvB-L). Residues Ile23, Arg24, Gly65, Lys68, Thr69, Thr70, 131–133 (EDY), Arg174, Tyr184, and Arg221 contribute to the ATP site. Thr69 is a binding site for Mg(2+). Residues 185 to 255 (SVDDLTSIVK…IAKQALAMLD (71 aa)) form a small ATPAse domain (RuvB-S) region. The interval 258 to 334 (SEGFDFMDIK…YAHLGIAKLD (77 aa)) is head domain (RuvB-H). Positions 294, 313, and 318 each coordinate DNA.

This sequence belongs to the RuvB family. In terms of assembly, homohexamer. Forms an RuvA(8)-RuvB(12)-Holliday junction (HJ) complex. HJ DNA is sandwiched between 2 RuvA tetramers; dsDNA enters through RuvA and exits via RuvB. An RuvB hexamer assembles on each DNA strand where it exits the tetramer. Each RuvB hexamer is contacted by two RuvA subunits (via domain III) on 2 adjacent RuvB subunits; this complex drives branch migration. In the full resolvosome a probable DNA-RuvA(4)-RuvB(12)-RuvC(2) complex forms which resolves the HJ.

The protein resides in the cytoplasm. It carries out the reaction ATP + H2O = ADP + phosphate + H(+). Functionally, the RuvA-RuvB-RuvC complex processes Holliday junction (HJ) DNA during genetic recombination and DNA repair, while the RuvA-RuvB complex plays an important role in the rescue of blocked DNA replication forks via replication fork reversal (RFR). RuvA specifically binds to HJ cruciform DNA, conferring on it an open structure. The RuvB hexamer acts as an ATP-dependent pump, pulling dsDNA into and through the RuvAB complex. RuvB forms 2 homohexamers on either side of HJ DNA bound by 1 or 2 RuvA tetramers; 4 subunits per hexamer contact DNA at a time. Coordinated motions by a converter formed by DNA-disengaged RuvB subunits stimulates ATP hydrolysis and nucleotide exchange. Immobilization of the converter enables RuvB to convert the ATP-contained energy into a lever motion, pulling 2 nucleotides of DNA out of the RuvA tetramer per ATP hydrolyzed, thus driving DNA branch migration. The RuvB motors rotate together with the DNA substrate, which together with the progressing nucleotide cycle form the mechanistic basis for DNA recombination by continuous HJ branch migration. Branch migration allows RuvC to scan DNA until it finds its consensus sequence, where it cleaves and resolves cruciform DNA. This chain is Holliday junction branch migration complex subunit RuvB, found in Actinobacillus pleuropneumoniae serotype 5b (strain L20).